The chain runs to 352 residues: Plant intracellular Ras-group-related LRR protein 1 (352 aa).

The segment at 1–25 is disordered; that stretch reads MREMGEKRRRGHLNPAGFAGGLHDH. LRR repeat units follow at residues 29–52, 53–75, 77–99, 100–122, 124–146, 147–169, 171–192, 195–217, 218–241, and 243–263; these read KNEE…TMSL, GQVT…IIAR, LNVV…IGCL, SKLK…IEEC, ALEE…GFEL, HSLR…TSHM, ALRA…LENL, LEAL…VGLL, ASLR…GCLT, and LARF…VVEQ. The short motif at 264–271 is the GVYW; degenerate element; sequence GLDAMRAY.

It belongs to the SHOC2 family. Widely expressed but at a lower level in seedlings and stems.

In terms of biological role, leucine-rich repeat protein that likely mediates protein interactions, possibly in the context of signal transduction. The polypeptide is Plant intracellular Ras-group-related LRR protein 1 (IRL1) (Oryza sativa subsp. japonica (Rice)).